A 131-amino-acid polypeptide reads, in one-letter code: MAKRKVTNKKRVVKKNIARGIIHIAATFNNTSVTITDEMGNVICWSTAGALGFKGSKKSTPYAAQQAVEDAVVKAKEHGIKELGIKVQGPGSGRETAVKSLGSIEGIKVLWFKDVTPLPHNGCRPPKRRRV.

This sequence belongs to the universal ribosomal protein uS11 family. As to quaternary structure, part of the 30S ribosomal subunit. Interacts with proteins S7 and S18. Binds to IF-3.

In terms of biological role, located on the platform of the 30S subunit, it bridges several disparate RNA helices of the 16S rRNA. Forms part of the Shine-Dalgarno cleft in the 70S ribosome. This chain is Small ribosomal subunit protein uS11, found in Wolinella succinogenes (strain ATCC 29543 / DSM 1740 / CCUG 13145 / JCM 31913 / LMG 7466 / NCTC 11488 / FDC 602W) (Vibrio succinogenes).